The chain runs to 434 residues: ATP-dependent RNA helicase SUB2 (434 aa).

Over residues 1-16 (MSGEEDLIDYSDDELN) the composition is skewed to acidic residues. Residues 1-32 (MSGEEDLIDYSDDELNNETTAPASNGKKGDAA) form a disordered region. The Q motif motif lies at 50–78 (TGFRDFLLKPELLRAIADCGFEHPSEVQQ). Positions 81 to 256 (IPQAMLGGDI…RKFMQNPTEH (176 aa)) constitute a Helicase ATP-binding domain. Position 94-101 (94-101 (AKSGLGKT)) interacts with ATP. The DEAD box signature appears at 203 to 206 (DECD). The Helicase C-terminal domain occupies 268 to 429 (GLQQYYIPLE…EFPKEGIDAS (162 aa)).

Belongs to the DEAD box helicase family. DECD subfamily.

It is found in the nucleus. It carries out the reaction ATP + H2O = ADP + phosphate + H(+). Its function is as follows. ATP-binding RNA helicase involved in transcription elongation and required for the export of mRNA out of the nucleus. SUB2 also plays a role in pre-mRNA splicing and spliceosome assembly. May be involved in rDNA and telomeric silencing, and maintenance of genome integrity. The chain is ATP-dependent RNA helicase SUB2 (SUB2) from Chaetomium globosum (strain ATCC 6205 / CBS 148.51 / DSM 1962 / NBRC 6347 / NRRL 1970) (Soil fungus).